A 70-amino-acid chain; its full sequence is Large ribosomal subunit protein bL31 (70 aa).

C16, C18, C37, and C40 together coordinate Zn(2+).

It belongs to the bacterial ribosomal protein bL31 family. Type A subfamily. In terms of assembly, part of the 50S ribosomal subunit. The cofactor is Zn(2+).

Binds the 23S rRNA. In Enterobacter sp. (strain 638), this protein is Large ribosomal subunit protein bL31.